The primary structure comprises 400 residues: D-alanyl-D-alanine carboxypeptidase DacC (400 aa).

An N-terminal signal peptide occupies residues Met1–Ala27. The active-site Acyl-ester intermediate is the Ser66. Lys69 acts as the Proton acceptor in catalysis. Residue Ser132 is part of the active site. Residue Lys235 coordinates substrate. The tract at residues Val383–Ser400 is required for inner membrane binding.

Belongs to the peptidase S11 family.

Its subcellular location is the cell inner membrane. It catalyses the reaction Preferential cleavage: (Ac)2-L-Lys-D-Ala-|-D-Ala. Also transpeptidation of peptidyl-alanyl moieties that are N-acyl substituents of D-alanine.. It participates in cell wall biogenesis; peptidoglycan biosynthesis. In terms of biological role, removes C-terminal D-alanyl residues from sugar-peptide cell wall precursors. This chain is D-alanyl-D-alanine carboxypeptidase DacC (dacC), found in Escherichia coli (strain K12).